The following is a 377-amino-acid chain: NADP-dependent oxidoreductase lnbE (377 aa).

NADP(+)-binding positions include 170–173 (GGNG), 257–263 (LTNPRVS), and 293–295 (SPV).

This sequence belongs to the NADP-dependent oxidoreductase L4BD family.

It participates in secondary metabolite biosynthesis. Its function is as follows. NADP-dependent oxidoreductase; part of the lnb gene cluster that mediates the biosynthesis of diastereomeric piperazines. Lna and lnb clusters encode sets of enzymes that produce overlapping sets of previously undescribed metabolites such as piperazinomycin-like metabolites or morpholine. The lna and lnb biosynthetic pathways appear to be part of a signaling network that controls the formation of sclerotia, a resilient overwintering structure. One primary function of the non-canonical nonribosomal peptide synthetases lnaA and lnbA consists in the reduction of L-tyrosine. The presence in the clusters of tailoring enzymes such as the oxidoreductases lnaB, lnbB, lnaE or lnbE, as well as of the cytochrome P450 monooxygenases lnaC, lnaD, or lnbC, might explain formation of various diastereomeric piperazines. This chain is NADP-dependent oxidoreductase lnbE, found in Aspergillus flavus (strain ATCC 200026 / FGSC A1120 / IAM 13836 / NRRL 3357 / JCM 12722 / SRRC 167).